The sequence spans 239 residues: 1-(5-phosphoribosyl)-5-[(5-phosphoribosylamino)methylideneamino] imidazole-4-carboxamide isomerase (239 aa).

The active-site Proton acceptor is Asp-8. Residue Asp-129 is the Proton donor of the active site.

The protein belongs to the HisA/HisF family.

The protein resides in the cytoplasm. It catalyses the reaction 1-(5-phospho-beta-D-ribosyl)-5-[(5-phospho-beta-D-ribosylamino)methylideneamino]imidazole-4-carboxamide = 5-[(5-phospho-1-deoxy-D-ribulos-1-ylimino)methylamino]-1-(5-phospho-beta-D-ribosyl)imidazole-4-carboxamide. Its pathway is amino-acid biosynthesis; L-histidine biosynthesis; L-histidine from 5-phospho-alpha-D-ribose 1-diphosphate: step 4/9. This Legionella pneumophila (strain Paris) protein is 1-(5-phosphoribosyl)-5-[(5-phosphoribosylamino)methylideneamino] imidazole-4-carboxamide isomerase.